A 294-amino-acid chain; its full sequence is ATP synthase gamma chain (294 aa).

This sequence belongs to the ATPase gamma chain family. As to quaternary structure, F-type ATPases have 2 components, CF(1) - the catalytic core - and CF(0) - the membrane proton channel. CF(1) has five subunits: alpha(3), beta(3), gamma(1), delta(1), epsilon(1). CF(0) has three main subunits: a, b and c.

It is found in the cell inner membrane. Produces ATP from ADP in the presence of a proton gradient across the membrane. The gamma chain is believed to be important in regulating ATPase activity and the flow of protons through the CF(0) complex. This chain is ATP synthase gamma chain, found in Caulobacter sp. (strain K31).